A 236-amino-acid chain; its full sequence is Large ribosomal subunit protein uL3 (236 aa).

Positions 139–149 are enriched in low complexity; the sequence is SVSHRSHGSTG. Residues 139–165 form a disordered region; it reads SVSHRSHGSTGQRQDPGKVFKGKKMAG. Residue Gln-152 is modified to N5-methylglutamine.

The protein belongs to the universal ribosomal protein uL3 family. As to quaternary structure, part of the 50S ribosomal subunit. Forms a cluster with proteins L14 and L19. Post-translationally, methylated by PrmB.

One of the primary rRNA binding proteins, it binds directly near the 3'-end of the 23S rRNA, where it nucleates assembly of the 50S subunit. The sequence is that of Large ribosomal subunit protein uL3 from Pelagibacter ubique (strain HTCC1062).